Reading from the N-terminus, the 653-residue chain is Chaperone protein DnaK (653 aa).

The residue at position 200 (T200) is a Phosphothreonine; by autocatalysis. A disordered region spans residues 615-653 (AEAAAAGAAGAGGAGASAGGASQQQDDVVDAEFKEVKKD). Residues 623–632 (AGAGGAGASA) show a composition bias toward gly residues.

It belongs to the heat shock protein 70 family.

In terms of biological role, acts as a chaperone. The sequence is that of Chaperone protein DnaK from Paraburkholderia xenovorans (strain LB400).